The sequence spans 284 residues: Ribosomal RNA small subunit methyltransferase A (284 aa).

Asparagine 12, leucine 14, glycine 38, glutamate 59, aspartate 81, and asparagine 106 together coordinate S-adenosyl-L-methionine.

It belongs to the class I-like SAM-binding methyltransferase superfamily. rRNA adenine N(6)-methyltransferase family. RsmA subfamily.

The protein localises to the cytoplasm. The catalysed reaction is adenosine(1518)/adenosine(1519) in 16S rRNA + 4 S-adenosyl-L-methionine = N(6)-dimethyladenosine(1518)/N(6)-dimethyladenosine(1519) in 16S rRNA + 4 S-adenosyl-L-homocysteine + 4 H(+). In terms of biological role, specifically dimethylates two adjacent adenosines (A1518 and A1519) in the loop of a conserved hairpin near the 3'-end of 16S rRNA in the 30S particle. May play a critical role in biogenesis of 30S subunits. This is Ribosomal RNA small subunit methyltransferase A from Phytoplasma australiense.